The chain runs to 650 residues: Serine/threonine-protein phosphatase with EF-hands 1 (650 aa).

In terms of domain architecture, IQ spans 16–45 (VIKAALVIQNWYRRYRARLRVRQHYALAIF). A catalytic region spans residues 124-456 (IHILLQAFKQ…PQFFQYQVTS (333 aa)). Aspartate 175, histidine 177, aspartate 204, and asparagine 236 together coordinate Mn(2+). Catalysis depends on histidine 237, which acts as the Proton donor. Histidine 288 is a Mn(2+) binding site. Positions 315-348 (PVLGNQETGEKRNKSASNYVEPRKVEPDKTPSED) are disordered. Basic and acidic residues predominate over residues 335-348 (EPRKVEPDKTPSED). Histidine 404 is a Mn(2+) binding site. 3 consecutive EF-hand domains span residues 484–519 (SRKT…ILGL), 567–602 (RYRS…FNAH), and 607–642 (IDDS…VHKY). Residues aspartate 497, serine 499, serine 501, arginine 503, glutamate 508, aspartate 580, aspartate 582, serine 584, glutamate 591, aspartate 620, asparagine 622, aspartate 624, asparagine 626, and glutamate 631 each coordinate Ca(2+).

This sequence belongs to the PPP phosphatase family. Mn(2+) serves as cofactor. It depends on Mg(2+) as a cofactor. In terms of tissue distribution, in the embryo it is almost exclusively expressed in the peripheral nervous system, within sensory neurons of cranial and dorsal root ganglia. Otherwise found in fetal inner ear and a small group of neurons in the midbrain/pons junction.

It catalyses the reaction O-phospho-L-seryl-[protein] + H2O = L-seryl-[protein] + phosphate. The catalysed reaction is O-phospho-L-threonyl-[protein] + H2O = L-threonyl-[protein] + phosphate. With respect to regulation, activated by calcium. In terms of biological role, may have a role in the recovery or adaptation response of photoreceptors. May have a role in diverse sensory neurons and in development. This Mus musculus (Mouse) protein is Serine/threonine-protein phosphatase with EF-hands 1 (Ppef1).